Reading from the N-terminus, the 321-residue chain is MHPSTFVTTIACLAGLAHGYANPGSCSGACNIHDPALIRRQSDGKYFRFSTGNKISYASSSSIKGPWTVLGSVLPRGSSINLPGKTDLWAPDISLVNGAYHLYYSVSAFGSQDSAIGLATSATMDPNSWTDHGSTGIRSSSSKPYNAIDANLFHDGGNYYMTFGSFWHDIYQAPMNSAATAVSSGPYNIAYNPSGTHAVEGAFMYKFGKYYYLFFSSGICCGYDTSRPAAGKEYKIRVCRSTSATGHFVDKHGVSCTNGGGTVVLESHGHVYGPGGQGVFTDPALGPVLYYHYVDTRIGYADGQKRFGWNKIDFSSGWPVV.

The N-terminal stretch at 1-19 (MHPSTFVTTIACLAGLAHG) is a signal peptide. Catalysis depends on aspartate 34, which acts as the Proton acceptor. Glutamate 200 (proton donor) is an active-site residue.

It belongs to the glycosyl hydrolase 43 family.

It localises to the secreted. The enzyme catalyses Endohydrolysis of (1-&gt;5)-alpha-arabinofuranosidic linkages in (1-&gt;5)-arabinans.. The protein operates within glycan metabolism; L-arabinan degradation. In terms of biological role, endo-1,5-alpha-L-arabinanase involved in degradation of pectin. Its preferred substrate is linear 1,5-alpha-L-arabinan. This Aspergillus clavatus (strain ATCC 1007 / CBS 513.65 / DSM 816 / NCTC 3887 / NRRL 1 / QM 1276 / 107) protein is Probable arabinan endo-1,5-alpha-L-arabinosidase A (abnA).